The primary structure comprises 448 residues: Argininosuccinate synthase (448 aa).

ATP is bound by residues 17 to 25 (AFSGGLDTS) and Ala-43. Tyr-99 serves as a coordination point for L-citrulline. Residues Gly-129 and Thr-131 each coordinate ATP. L-aspartate is bound by residues Thr-131, Asn-135, and Asp-136. Asn-135 contacts L-citrulline. Position 136 (Asp-136) interacts with ATP. Residues Arg-139 and Ser-192 each coordinate L-citrulline. Asp-194 is a binding site for ATP. Residues Thr-201, Glu-203, and Glu-280 each contribute to the L-citrulline site.

Belongs to the argininosuccinate synthase family. Type 2 subfamily. Homotetramer.

Its subcellular location is the cytoplasm. It carries out the reaction L-citrulline + L-aspartate + ATP = 2-(N(omega)-L-arginino)succinate + AMP + diphosphate + H(+). Its pathway is amino-acid biosynthesis; L-arginine biosynthesis; L-arginine from L-ornithine and carbamoyl phosphate: step 2/3. In Acidovorax ebreus (strain TPSY) (Diaphorobacter sp. (strain TPSY)), this protein is Argininosuccinate synthase.